A 186-amino-acid chain; its full sequence is Centromere protein M (186 aa).

It is found in the nucleus. The protein localises to the chromosome. Its subcellular location is the centromere. Functionally, probable component of a centromeric complex involved in assembly of kinetochore proteins, mitotic progression and chromosome segregation. In Danio rerio (Zebrafish), this protein is Centromere protein M (cenpm).